A 766-amino-acid polypeptide reads, in one-letter code: Disabled homolog 2 (766 aa).

Positions 1–16 (MSNEVETSTTNGQPDQ) are enriched in polar residues. The interval 1-36 (MSNEVETSTTNGQPDQQAAPKAPSKKEKKKGSEKTD) is disordered. N-acetylserine is present on serine 2. Residue serine 2 is modified to Phosphoserine. Positions 45–196 (GDGVKYKAKL…KAEENGSEAL (152 aa)) constitute a PID domain. Tyrosine 170 is modified (phosphotyrosine). The residue at position 193 (serine 193) is a Phosphoserine. The tract at residues 230–447 (ESKDILLVDL…KPGRGRRTAK (218 aa)) is required for localization to clathrin-coated pits. Disordered stretches follow at residues 284-482 (LNFF…NFLD), 596-630 (PPPT…LKDI), 659-683 (RQPP…FSSY), and 699-766 (DFDA…NPFA). Short sequence motifs (DPF) lie at residues 293–295 (DPF) and 298–300 (DPF). Polar residues-rich tracts occupy residues 303 to 334 (PDQS…QSKG) and 367 to 381 (PSSQ…QNGV). At serine 323 the chain carries Phosphoserine. A phosphoserine; in mitosis mark is found at serine 326 and serine 328. Serine 401 bears the Phosphoserine mark. Positions 467–480 (MSPTGQPAVPQSNF) are enriched in polar residues. Positions 600–612 (MSTQSSPQPMMSS) are enriched in low complexity. The sufficient for interaction with GRB2 stretch occupies residues 600–730 (MSTQSSPQPM…VLLGTKSADN (131 aa)). Positions 617-625 (PPQPPPRNG) are required for interaction with CSK. Residues 647-766 (KEVKEMFKDF…HRSPFGNPFA (120 aa)) are required for interaction with MYO6. Positions 661–669 (PPLVPSRKG) are required for interaction with GRB2 and CSK. Threonine 671 bears the Phosphothreonine mark. Over residues 673–683 (PSGTSSAFSSY) the composition is skewed to polar residues. A sufficient for interaction with SH3KBP1 SH3 domain region spans residues 707-723 (NKINEPPKPAPRQGVLL). Phosphoserine is present on residues serine 727 and serine 759. Residues 727–753 (SADNSLENPFSKGFSSSNPSVVSQPAS) are compositionally biased toward polar residues.

As to quaternary structure, interacts (via NPXY motif) with DAB2 (via PID domain). Can interact (via PID domain) with LDLR, APP, APLP1 and APLP2, and weakly with INPP5D (via NPXY motifs); the interaction is impaired by tyrosine phosphorylation of the respective NPXY motifs. Can weakly interact (via PID domain) with LRP1 (via NPXY motif); the interaction is enhanced by tyrosine phosphorylation of the NPXY motif. Interacts with LRP2 (via NPXY motif); the interaction is not affected by tyrosine phosphorylation of the NPXY motif. Interacts with clathrin; in vitro can assemble clathrin triskelia into polyhedral coats. Interacts with AP2A2, ITGB1, ITGB3, ITGB5, PIAS2, DAB2IP, NOSTRIN, FCHO1, DVL3 and EPS15L1. Interacts with SH3KBP1 (via SH3 domains). Interacts with GRB2; competes with SOS1 for binding to GRB2 and the interaction is enhanced by EGF and NT-3 stimulation. Isoform p96 interacts with EPS15 and ITSN1; isoform p67 does not interact with EPS15 and only weakly interacts with ITSN1. Interacts with MAP3K7; the interaction is induced by TGF-beta stimulation and may mediate TGF-beta stimulated JNK activation. Interacts with AXIN1 and PPP1CA; the interactions are mutually exclusive. Interacts with the globular tail of MYO6. Interacts (via DPF motifs) with FCHO2; the interaction is direct and required for DAB2-mediated LDLR endocytosis. Interacts with LRP6; the interaction involves LRP6 phosphorylation by CK2 and sequesters LRP6 towards clathrin-mediated endocytosis. Associates with the TGF-beta receptor complex. Interacts with SMAD2 and SMAD3; the interactions are enhanced upon TGF-beta stimulation. Interacts with GRB2; the interaction is enhanced by EGF and NT-3 stimulation. Interacts with SRC; the interaction is enhanced by EGF stimulation. In terms of processing, phosphorylated on serine residues in response to mitogenic growth-factor stimulation. Phosphorylation during mitosis is leading to membrane displacement. As to expression, isoform p96 and isoform p67 are expressed in adult kidney and fibroblasts with isoform p96 being the predominant form. Isoform p67 is the predominant isoform expressed in embryonic visceral endoderm.

It localises to the cytoplasmic vesicle. The protein localises to the clathrin-coated vesicle membrane. Its subcellular location is the membrane. It is found in the clathrin-coated pit. The protein resides in the cytoplasm. It localises to the nucleus. In terms of biological role, adapter protein that functions as a clathrin-associated sorting protein (CLASP) required for clathrin-mediated endocytosis of selected cargo proteins. Can bind and assemble clathrin, and binds simultaneously to phosphatidylinositol 4,5-bisphosphate (PtdIns(4,5)P2) and cargos containing non-phosphorylated NPXY internalization motifs, such as the LDL receptor, to recruit them to clathrin-coated pits. Can function in clathrin-mediated endocytosis independently of the AP-2 complex. Involved in endocytosis of integrin beta-1; this function seems to redundant with the AP-2 complex and seems to require DAB2 binding to endocytosis accessory EH domain-containing proteins such as EPS15, EPS15L1 and ITSN1. Involved in endocytosis of cystic fibrosis transmembrane conductance regulator/CFTR. Isoform p96 is involved in endocytosis of megalin/LRP2 lipoprotein receptor during embryonal development. Required for recycling of the TGF-beta receptor. Isoform p67 is not involved in LDL receptor endocytosis. Involved in CFTR trafficking to the late endosome. Involved in several receptor-mediated signaling pathways. Involved in TGF-beta receptor signaling and facilitates phosphorylation of the signal transducer SMAD2. Mediates TFG-beta-stimulated JNK activation. May inhibit the canoniocal Wnt/beta-catenin signaling pathway by stabilizing the beta-catenin destruction complex through a competing association with axin preventing its dephosphorylation through protein phosphatase 1 (PP1). Sequesters LRP6 towards clathrin-mediated endocytosis, leading to inhibition of Wnt/beta-catenin signaling. May activate non-canonical Wnt signaling. In cell surface growth factor/Ras signaling pathways proposed to inhibit ERK activation by interrupting the binding of GRB2 to SOS1 and to inhibit SRC by preventing its activating phosphorylation at 'Tyr-419'. Proposed to be involved in modulation of androgen receptor (AR) signaling mediated by SRC activation; seems to compete with AR for interaction with SRC. Plays a role in the CSF-1 signal transduction pathway. Plays a role in cellular differentiation. Involved in cell positioning and formation of visceral endoderm (VE) during embryogenesis and proposed to be required in the VE to respond to Nodal signaling coming from the epiblast. Required for the epithelial to mesenchymal transition, a process necessary for proper embryonic development. May be involved in myeloid cell differentiation and can induce macrophage adhesion and spreading. Isoform p67 may be involved in transcriptional regulation. May act as a tumor suppressor. The protein is Disabled homolog 2 (Dab2) of Mus musculus (Mouse).